The primary structure comprises 161 residues: Transcription antitermination protein NusB (161 aa).

This sequence belongs to the NusB family.

Its function is as follows. Involved in transcription antitermination. Required for transcription of ribosomal RNA (rRNA) genes. Binds specifically to the boxA antiterminator sequence of the ribosomal RNA (rrn) operons. In Nitrobacter winogradskyi (strain ATCC 25391 / DSM 10237 / CIP 104748 / NCIMB 11846 / Nb-255), this protein is Transcription antitermination protein NusB.